Consider the following 193-residue polypeptide: Glycerol-3-phosphate acyltransferase (193 aa).

5 helical membrane passes run 2–22 (AFIISIIIAYLLGSLSFAVIV), 51–71 (QAAFYVLLGDAAKGLIAVLIA), 78–98 (GVSLAFVGLVAVLGHLFPVYF), 112–132 (VLLGLSFWIALFVIATWVIVV), and 154–174 (IIAGRTDYLFPVLIIAILLIW).

This sequence belongs to the PlsY family. In terms of assembly, probably interacts with PlsX.

The protein resides in the cell inner membrane. The enzyme catalyses an acyl phosphate + sn-glycerol 3-phosphate = a 1-acyl-sn-glycero-3-phosphate + phosphate. It functions in the pathway lipid metabolism; phospholipid metabolism. In terms of biological role, catalyzes the transfer of an acyl group from acyl-phosphate (acyl-PO(4)) to glycerol-3-phosphate (G3P) to form lysophosphatidic acid (LPA). This enzyme utilizes acyl-phosphate as fatty acyl donor, but not acyl-CoA or acyl-ACP. This Coxiella burnetii (strain CbuG_Q212) (Coxiella burnetii (strain Q212)) protein is Glycerol-3-phosphate acyltransferase.